The following is an 835-amino-acid chain: Transcription intermediary factor 1-beta (835 aa).

Positions 14–24 (AATAASAASGS) are enriched in low complexity. Residues 14-57 (AATAASAASGSPGSGEGSAGGEKRPAASSAAAASASASSPAGGG) are disordered. Phosphoserine occurs at positions 24, 27, and 31. Lys36 participates in a covalent cross-link: Glycyl lysine isopeptide (Lys-Gly) (interchain with G-Cter in SUMO2). Positions 39-53 (AASSAAAASASASSP) are enriched in low complexity. Ser52 is subject to Phosphoserine. The RING-type zinc finger occupies 67 to 123 (CGVCRERLRPERDPRLLPCLHSACSACLGPATPAAANNSGDGGSAGDGAMVDCPVCK). A Glycyl lysine isopeptide (Lys-Gly) (interchain with G-Cter in SUMO2) cross-link involves residue Lys129. Ser140 carries the phosphoserine modification. The B box-type 1; atypical zinc finger occupies 150-197 (DANQCCTSCEDNAPATSYCVECSEPLCETCVEAHQRVKYTKDHTVRST). 4 residues coordinate Zn(2+): Cys155, Cys158, Cys179, and His183. Lys201 is covalently cross-linked (Glycyl lysine isopeptide (Lys-Gly) (interchain with G-Cter in SUMO2)). Residues 206–247 (ERTVYCNVHKHEPLVLFCESCDTLTCRDCQLNAHKDHQYQFL) form a B box-type 2 zinc finger. The Zn(2+) site is built by Cys211, His214, Cys234, and His239. Residues 248–378 (EDAVRNQRKL…LIYFQLHRAL (131 aa)) are leucine zipper alpha helical coiled-coil region. Residues 249–378 (DAVRNQRKLL…LIYFQLHRAL (130 aa)) are interaction with MAGEC2. Residues Lys256 and Lys263 each participate in a glycyl lysine isopeptide (Lys-Gly) (interchain with G-Cter in SUMO2) cross-link. The residue at position 268 (Lys268) is an N6-acetyllysine. Lys274 is covalently cross-linked (Glycyl lysine isopeptide (Lys-Gly) (interchain with G-Cter in SUMO2)). Lys306 is modified (N6-acetyllysine; alternate). Lys306 participates in a covalent cross-link: Glycyl lysine isopeptide (Lys-Gly) (interchain with G-Cter in SUMO2); alternate. A Glycyl lysine isopeptide (Lys-Gly) (interchain with G-Cter in SUMO2) cross-link involves residue Lys321. Position 342 is an N6-acetyllysine (Lys342). Residue Lys368 forms a Glycyl lysine isopeptide (Lys-Gly) (interchain with G-Cter in SUMO2) linkage. An involved in binding PPP1CA region spans residues 368–372 (KLIYF). Lys379 is modified (N6-acetyllysine; alternate). Residue Lys379 forms a Glycyl lysine isopeptide (Lys-Gly) (interchain with G-Cter in SUMO2); alternate linkage. A Glycyl lysine isopeptide (Lys-Gly) (interchain with G-Cter in SUMO1); alternate cross-link involves residue Lys379. Lys409 participates in a covalent cross-link: Glycyl lysine isopeptide (Lys-Gly) (interchain with G-Cter in SUMO2). Residues 413 to 481 (ERPGTNSTGP…SRSGEGEVSG (69 aa)) are disordered. Ser419 is modified (phosphoserine). Residue Lys436 forms a Glycyl lysine isopeptide (Lys-Gly) (interchain with G-Cter in SUMO2) linkage. Residues 436–445 (KQGSGSSQPM) are compositionally biased toward polar residues. Residues Ser439 and Ser441 each carry the phosphoserine modification. Residue Lys470 forms a Glycyl lysine isopeptide (Lys-Gly) (interchain with G-Cter in SUMO2); alternate linkage. Lys470 participates in a covalent cross-link: Glycyl lysine isopeptide (Lys-Gly) (interchain with G-Cter in SUMO1); alternate. A Citrulline modification is found at Arg471. Ser472 bears the Phosphoserine mark. Citrulline is present on Arg473. 3 positions are modified to phosphoserine: Ser474, Ser480, and Ser490. Positions 477 to 514 (GEVSGLMRKVPRVSLERLDLDLTSDSQPPVFKVFPGST) are HP1 box. Positions 482-495 (LMRKVPRVSLERLD) match the PxVxL motif motif. Residue Thr499 is modified to Phosphothreonine. The residue at position 502 (Ser502) is a Phosphoserine. Lys508 participates in a covalent cross-link: Glycyl lysine isopeptide (Lys-Gly) (interchain with G-Cter in SUMO2). Lys555 participates in a covalent cross-link: Glycyl lysine isopeptide (Lys-Gly) (interchain with G-Cter in SUMO2); alternate. Lys555 is covalently cross-linked (Glycyl lysine isopeptide (Lys-Gly) (interchain with G-Cter in SUMO); alternate). Residue Lys576 forms a Glycyl lysine isopeptide (Lys-Gly) (interchain with G-Cter in SUMO2) linkage. Ser595 carries the post-translational modification Phosphoserine. The segment at 626-673 (ATICRVCQKPGDLVMCNQCEFCFHLDCHLPSLQDVPGEEWSCSLCHVL) adopts a PHD-type zinc-finger fold. Lys677 is covalently cross-linked (Glycyl lysine isopeptide (Lys-Gly) (interchain with G-Cter in SUMO)). Ser684, Ser690, and Ser698 each carry phosphoserine. Residues 696 to 800 (KLSPANQRKC…RFFETRMNDA (105 aa)) form the Bromo domain. Lys751 participates in a covalent cross-link: Glycyl lysine isopeptide (Lys-Gly) (interchain with G-Cter in SUMO2); alternate. Lys751 is covalently cross-linked (Glycyl lysine isopeptide (Lys-Gly) (interchain with G-Cter in SUMO1); alternate). Lys751 is covalently cross-linked (Glycyl lysine isopeptide (Lys-Gly) (interchain with G-Cter in SUMO); alternate). Ser753 is modified (phosphoserine). Tyr756 is modified (phosphotyrosine). At Ser758 the chain carries Phosphoserine. N6-acetyllysine; alternate occurs at positions 771, 775, and 780. Residues Lys771, Lys775, and Lys780 each participate in a glycyl lysine isopeptide (Lys-Gly) (interchain with G-Cter in SUMO2); alternate cross-link. Lys780 is covalently cross-linked (Glycyl lysine isopeptide (Lys-Gly) (interchain with G-Cter in SUMO1); alternate). At Ser785 the chain carries Phosphoserine. A Glycyl lysine isopeptide (Lys-Gly) (interchain with G-Cter in SUMO2) cross-link involves residue Lys805. At Ser825 the chain carries Phosphoserine; by ATM and ATR and dsDNA kinase.

Belongs to the TRIM/RBCC family. In terms of assembly, interacts with ZNF382. Interacts with SETX. Oligomer; the RBCC domain homotrimerizes and interacts with one molecule of KRAB to form the KRAB-KAP1 corepressor complex. Binding to a KRAB domain is an absolute requirement for silencing gene expression. Interacts with CEBPB and NR3C1. Interacts with a number of KRAB-ZFP proteins including ZNF10, ZFP53, ZFP68 and ZNF256. Interacts with NCOR1, NR3C1 and CHD3. Interacts with CEBPB (via the RING-type and PHD-type zinc fingers). Component of a ternary complex that includes TRIM28, a HP1 protein (CBX1, CBX3 OR CBX5), a KRAB domain-containing protein, and DNA. Interacts with CBX5 (via the PxVxL motif); the interaction occurs in interphase nuclei and competes for binding POGZ. Interacts with POGZ; the interaction competes for interaction with CBX5. Interacts with SETDB1; the interaction is enhanced by KAP1 sumoylation, stimulates SETDB1 histone methyltransferase activity and gene silencing. Interacts (via the PHD-type zinc finger) with UBE2I; the interaction is required for sumoylation and repressor activity. Component of the TRIM28/KAP1-ERBB4-MDM2 complex involved in connecting growth factor and DNA damage responses. Interacts directly with ERBB4; the interaction represses ERBB4-mediated transcription activity. Interacts with MDM2; the interaction contributes to p53/TP53 inactivation. Component of the TRIM28/KAP1-MDM2-p53/TP53; involved in regulating p53/TP53 stabilization and activity. Interacts (via the leucine zipper alpha helical coiled-coil) with E2F1 (central region); the interaction inhibits E2F1 acetylation and transcriptional activity. Interacts with PPP1CA; the interaction dephosphorylates TRIM28 at Ser-824 and forms a complex at the p21 promoter site. Interacts with PPP1CB; the interaction is weak but is increased on dephosphorylation at Ser-824. Interacts with SMARCAD1. Interacts with, and sumoylates IRF7. Interacts with MAGEC2. Part of a complex composed of TRIM28, HDAC1, HDAC2 and EHMT2. Interacts with AICDA. The large PER complex involved in the histone methylation is composed of at least PER2, CBX3, TRIM28, SUV39H1 and/or SUV39H2; CBX3 mediates the formation of the complex. Interacts with NR4A3; the interactions potentiates NR4A3 activity on NurRE promoter. Interacts (unphosphorylated or phosphorylated form) with ZBTB1 (via BTB domain). Probably part of a corepressor complex containing ZNF304, TRIM28, SETDB1 and DNMT1. Interacts with ATRX. Forms a complex with ATRX, SETDB1 and ZNF274. Interacts with ZFP568; the interaction mediates ZFP568 transcriptional repression activity. Interacts with RRP1B. Interacts with CRY1. Interacts with ZNF263; recruited to the SIX3 promoter along with other proteins involved in chromatin modification and transcriptional corepression where it contributes to transcriptional repression. Interacts with CYREN (via XLF motif). Interacts with TRIM17; this interaction prevents TRIM28 activity. Interacts with ZNF746. Interacts with PHF13. Interacts with ZNF354C. Interacts with ZNF432; the interaction is independent of PARP1. In terms of processing, ATM-induced phosphorylation on Ser-825 represses sumoylation leading to the de-repression of expression of a subset of genes involved in cell cycle control and apoptosis in response to genotoxic stress. Dephosphorylation by the phosphatases, PPP1CA and PP1CB forms, allows sumoylation and expression of TRIM28 target genes. Post-translationally, sumoylation/desumoylation events regulate TRIM28-mediated transcriptional repression. Sumoylation is required for interaction with CHD3 and SETDB1 and the corepressor activity. Represses and is repressed by Ser-824 phosphorylation. Enhances the TRIM28 corepressor activity, inhibiting transcriptional activity of a number of genes including GADD45A and CDKN1A/p21. Lys-555, Lys-780 and Lys-805 are the major sites of sumoylation. In response to Dox-induced DNA damage, enhanced phosphorylation on Ser-825 prevents sumoylation and allows de-repression of CDKN1A/p21. Auto-ubiquitinated; enhanced by MAGEA2 and MAGEC2. In terms of processing, citrullinated by PADI4. Post-translationally, ADP-ribosylated by SIRT6, promoting TRIM28/KAP1 interaction with CBX5, thereby contributing to the packaging of LINE-1 retrotransposon elements into transcriptionally repressive heterochromatin.

It is found in the nucleus. The catalysed reaction is S-ubiquitinyl-[E2 ubiquitin-conjugating enzyme]-L-cysteine + [acceptor protein]-L-lysine = [E2 ubiquitin-conjugating enzyme]-L-cysteine + N(6)-ubiquitinyl-[acceptor protein]-L-lysine.. It participates in protein modification; protein sumoylation. Functionally, nuclear corepressor for KRAB domain-containing zinc finger proteins (KRAB-ZFPs). Mediates gene silencing by recruiting CHD3, a subunit of the nucleosome remodeling and deacetylation (NuRD) complex, and SETDB1 (which specifically methylates histone H3 at 'Lys-9' (H3K9me)) to the promoter regions of KRAB target genes. Enhances transcriptional repression by coordinating the increase in H3K9me, the decrease in histone H3 'Lys-9 and 'Lys-14' acetylation (H3K9ac and H3K14ac, respectively) and the disposition of HP1 proteins to silence gene expression. Recruitment of SETDB1 induces heterochromatinization. May play a role as a coactivator for CEBPB and NR3C1 in the transcriptional activation of ORM1. Also a corepressor for ERBB4. Inhibits E2F1 activity by stimulating E2F1-HDAC1 complex formation and inhibiting E2F1 acetylation. May serve as a partial backup to prevent E2F1-mediated apoptosis in the absence of RB1. Important regulator of CDKN1A/p21(CIP1). Has E3 SUMO-protein ligase activity toward itself via its PHD-type zinc finger. Also specifically sumoylates IRF7, thereby inhibiting its transactivation activity. Ubiquitinates p53/TP53 leading to its proteasomal degradation; the function is enhanced by MAGEC2 and MAGEA2, and possibly MAGEA3 and MAGEA6. Mediates the nuclear localization of KOX1, ZNF268 and ZNF300 transcription factors. In association with isoform 2 of ZFP90, is required for the transcriptional repressor activity of FOXP3 and the suppressive function of regulatory T-cells (Treg). Probably forms a corepressor complex required for activated KRAS-mediated promoter hypermethylation and transcriptional silencing of tumor suppressor genes (TSGs) or other tumor-related genes in colorectal cancer (CRC) cells. Required to maintain a transcriptionally repressive state of genes in undifferentiated embryonic stem cells (ESCs). In ESCs, in collaboration with SETDB1, is also required for H3K9me3 and silencing of endogenous and introduced retroviruses in a DNA-methylation independent-pathway. Associates at promoter regions of tumor suppressor genes (TSGs) leading to their gene silencing. The SETDB1-TRIM28-ZNF274 complex may play a role in recruiting ATRX to the 3'-exons of zinc finger genes with atypical chromatin signatures to establish or maintain/protect H3K9me3 at these transcriptionally active regions. This Rattus norvegicus (Rat) protein is Transcription intermediary factor 1-beta.